The primary structure comprises 259 residues: Flap endonuclease Xni (259 aa).

Residue D109 coordinates Mg(2+). The region spanning 165–255 (VTPAQLTDYW…FNLQDIRFNS (91 aa)) is the 5'-3' exonuclease domain. L176, P185, V187, and I190 together coordinate K(+). The interval 189–194 (GIGPKA) is interaction with DNA.

The protein belongs to the Xni family. The cofactor is Mg(2+). K(+) serves as cofactor.

Functionally, has flap endonuclease activity. During DNA replication, flap endonucleases cleave the 5'-overhanging flap structure that is generated by displacement synthesis when DNA polymerase encounters the 5'-end of a downstream Okazaki fragment. This chain is Flap endonuclease Xni, found in Vibrio cholerae serotype O1 (strain ATCC 39315 / El Tor Inaba N16961).